A 227-amino-acid polypeptide reads, in one-letter code: Ribose-5-phosphate isomerase A (227 aa).

Substrate contacts are provided by residues 26 to 29 (TGST), 82 to 85 (DGAD), and 95 to 98 (KGGG). The Proton acceptor role is filled by Glu104. Lys122 contributes to the substrate binding site.

The protein belongs to the ribose 5-phosphate isomerase family. As to quaternary structure, homodimer.

It catalyses the reaction aldehydo-D-ribose 5-phosphate = D-ribulose 5-phosphate. It participates in carbohydrate degradation; pentose phosphate pathway; D-ribose 5-phosphate from D-ribulose 5-phosphate (non-oxidative stage): step 1/1. Functionally, catalyzes the reversible conversion of ribose-5-phosphate to ribulose 5-phosphate. This is Ribose-5-phosphate isomerase A from Streptococcus pyogenes serotype M5 (strain Manfredo).